A 122-amino-acid chain; its full sequence is Small ribosomal subunit protein uS13 (122 aa).

The tract at residues 97–122 is disordered; the sequence is PVRGQRTHTNARTRKGPARAIAGKKK.

This sequence belongs to the universal ribosomal protein uS13 family. Part of the 30S ribosomal subunit. Forms a loose heterodimer with protein S19. Forms two bridges to the 50S subunit in the 70S ribosome.

In terms of biological role, located at the top of the head of the 30S subunit, it contacts several helices of the 16S rRNA. In the 70S ribosome it contacts the 23S rRNA (bridge B1a) and protein L5 of the 50S subunit (bridge B1b), connecting the 2 subunits; these bridges are implicated in subunit movement. Contacts the tRNAs in the A and P-sites. This Bartonella bacilliformis (strain ATCC 35685 / KC583 / Herrer 020/F12,63) protein is Small ribosomal subunit protein uS13.